A 351-amino-acid chain; its full sequence is Serine/threonine-protein kinase mos (351 aa).

In terms of domain architecture, Protein kinase spans 71–340 (FSIDGVIGSG…ERRTDDTENL (270 aa)). Residues 77-85 (IGSGGFGSV) and lysine 98 each bind ATP. Aspartate 194 functions as the Proton acceptor in the catalytic mechanism.

This sequence belongs to the protein kinase superfamily. Ser/Thr protein kinase family.

The enzyme catalyses L-seryl-[protein] + ATP = O-phospho-L-seryl-[protein] + ADP + H(+). It catalyses the reaction L-threonyl-[protein] + ATP = O-phospho-L-threonyl-[protein] + ADP + H(+). Functionally, suppresses the mitotic cell cycle in oocytes, forcing them to undergo meiosis II to produce haploid gametes. Acts as a MAPK kinase kinase (MAP3K) that acts upstream of MAP kinase in oocytes. This Patiria pectinifera (Starfish) protein is Serine/threonine-protein kinase mos.